We begin with the raw amino-acid sequence, 398 residues long: S-adenosylmethionine synthase (398 aa).

Histidine 17 provides a ligand contact to ATP. Aspartate 19 lines the Mg(2+) pocket. Glutamate 45 contributes to the K(+) binding site. L-methionine-binding residues include glutamate 58 and glutamine 101. Residues 101–111 form a flexible loop region; the sequence is QSPDIAQGVDT. Residues 176–178, 243–244, aspartate 252, 258–259, and lysine 279 contribute to the ATP site; these read DGK, RF, and RK. Residue aspartate 252 coordinates L-methionine. Lysine 283 is a binding site for L-methionine.

It belongs to the AdoMet synthase family. As to quaternary structure, homotetramer; dimer of dimers. It depends on Mg(2+) as a cofactor. The cofactor is K(+).

The protein localises to the cytoplasm. It catalyses the reaction L-methionine + ATP + H2O = S-adenosyl-L-methionine + phosphate + diphosphate. The protein operates within amino-acid biosynthesis; S-adenosyl-L-methionine biosynthesis; S-adenosyl-L-methionine from L-methionine: step 1/1. Its function is as follows. Catalyzes the formation of S-adenosylmethionine (AdoMet) from methionine and ATP. The overall synthetic reaction is composed of two sequential steps, AdoMet formation and the subsequent tripolyphosphate hydrolysis which occurs prior to release of AdoMet from the enzyme. The sequence is that of S-adenosylmethionine synthase from Staphylococcus saprophyticus subsp. saprophyticus (strain ATCC 15305 / DSM 20229 / NCIMB 8711 / NCTC 7292 / S-41).